The following is a 407-amino-acid chain: UDP-N-acetyl-D-mannosamine dehydrogenase (407 aa).

Belongs to the UDP-glucose/GDP-mannose dehydrogenase family.

The enzyme catalyses UDP-N-acetyl-alpha-D-mannosamine + 2 NAD(+) + H2O = UDP-N-acetyl-alpha-D-mannosaminouronate + 2 NADH + 3 H(+). Its pathway is capsule biogenesis; capsule polysaccharide biosynthesis. In terms of biological role, dehydrogenase involved in the biosynthesis of capsular polysaccharides. Catalyzes the NAD(+)-dependent oxidation of UDP-N-acetyl-D-mannosamine (UDP-ManNAc) to UDP-N-acetyl-D-mannosaminuronic acid (UDP-ManNAcA). This chain is UDP-N-acetyl-D-mannosamine dehydrogenase, found in Campylobacter jejuni.